A 318-amino-acid chain; its full sequence is Beta-ketoacyl-[acyl-carrier-protein] synthase III (318 aa).

Catalysis depends on residues Cys112 and His245. Residues 246-250 (QANIR) are ACP-binding. Residue Asn275 is part of the active site.

The protein belongs to the thiolase-like superfamily. FabH family. Homodimer.

Its subcellular location is the cytoplasm. It carries out the reaction malonyl-[ACP] + acetyl-CoA + H(+) = 3-oxobutanoyl-[ACP] + CO2 + CoA. It functions in the pathway lipid metabolism; fatty acid biosynthesis. In terms of biological role, catalyzes the condensation reaction of fatty acid synthesis by the addition to an acyl acceptor of two carbons from malonyl-ACP. Catalyzes the first condensation reaction which initiates fatty acid synthesis and may therefore play a role in governing the total rate of fatty acid production. Possesses both acetoacetyl-ACP synthase and acetyl transacylase activities. Its substrate specificity determines the biosynthesis of branched-chain and/or straight-chain of fatty acids. This is Beta-ketoacyl-[acyl-carrier-protein] synthase III from Rickettsia conorii (strain ATCC VR-613 / Malish 7).